The sequence spans 336 residues: Holliday junction branch migration complex subunit RuvB (336 aa).

Residues 2 to 186 (QDQEEERMIT…FGVICKLELY (185 aa)) form a large ATPase domain (RuvB-L) region. ATP is bound by residues Leu25, Arg26, Gly67, Lys70, Thr71, Thr72, 133-135 (EDF), Arg176, Tyr186, and Arg223. Thr71 provides a ligand contact to Mg(2+). Residues 187–257 (NNKQLTAIVK…VAEEALILLE (71 aa)) are small ATPAse domain (RuvB-S). The segment at 260–336 (SLGLDNTDKK…YEHFNIPSAE (77 aa)) is head domain (RuvB-H). Arg296, Arg315, and Arg320 together coordinate DNA.

The protein belongs to the RuvB family. As to quaternary structure, homohexamer. Forms an RuvA(8)-RuvB(12)-Holliday junction (HJ) complex. HJ DNA is sandwiched between 2 RuvA tetramers; dsDNA enters through RuvA and exits via RuvB. An RuvB hexamer assembles on each DNA strand where it exits the tetramer. Each RuvB hexamer is contacted by two RuvA subunits (via domain III) on 2 adjacent RuvB subunits; this complex drives branch migration. In the full resolvosome a probable DNA-RuvA(4)-RuvB(12)-RuvC(2) complex forms which resolves the HJ.

The protein localises to the cytoplasm. It carries out the reaction ATP + H2O = ADP + phosphate + H(+). The RuvA-RuvB-RuvC complex processes Holliday junction (HJ) DNA during genetic recombination and DNA repair, while the RuvA-RuvB complex plays an important role in the rescue of blocked DNA replication forks via replication fork reversal (RFR). RuvA specifically binds to HJ cruciform DNA, conferring on it an open structure. The RuvB hexamer acts as an ATP-dependent pump, pulling dsDNA into and through the RuvAB complex. RuvB forms 2 homohexamers on either side of HJ DNA bound by 1 or 2 RuvA tetramers; 4 subunits per hexamer contact DNA at a time. Coordinated motions by a converter formed by DNA-disengaged RuvB subunits stimulates ATP hydrolysis and nucleotide exchange. Immobilization of the converter enables RuvB to convert the ATP-contained energy into a lever motion, pulling 2 nucleotides of DNA out of the RuvA tetramer per ATP hydrolyzed, thus driving DNA branch migration. The RuvB motors rotate together with the DNA substrate, which together with the progressing nucleotide cycle form the mechanistic basis for DNA recombination by continuous HJ branch migration. Branch migration allows RuvC to scan DNA until it finds its consensus sequence, where it cleaves and resolves cruciform DNA. This chain is Holliday junction branch migration complex subunit RuvB, found in Alkaliphilus metalliredigens (strain QYMF).